A 964-amino-acid chain; its full sequence is Probable outer membrane protein PmpE (964 aa).

The first 18 residues, 1–18 (MKKAFFFFLIGNSLSGLA), serve as a signal peptide directing secretion. In terms of domain architecture, Autotransporter spans 683 to 964 (LTPSGHPFWG…YLNGEIALRF (282 aa)).

This sequence belongs to the PMP outer membrane protein family.

Its subcellular location is the secreted. It is found in the cell wall. It localises to the cell outer membrane. The chain is Probable outer membrane protein PmpE (pmpE) from Chlamydia trachomatis serovar D (strain ATCC VR-885 / DSM 19411 / UW-3/Cx).